The chain runs to 472 residues: Adenosylhomocysteinase (472 aa).

3 residues coordinate substrate: T64, D138, and E198. Residue 199-201 (TTT) participates in NAD(+) binding. K228 and D232 together coordinate substrate. Residues N233, 262-267 (GFGDVG), E285, N320, 341-343 (IGH), and N386 each bind NAD(+).

Belongs to the adenosylhomocysteinase family. Requires NAD(+) as cofactor.

It is found in the cytoplasm. It catalyses the reaction S-adenosyl-L-homocysteine + H2O = L-homocysteine + adenosine. It participates in amino-acid biosynthesis; L-homocysteine biosynthesis; L-homocysteine from S-adenosyl-L-homocysteine: step 1/1. Its function is as follows. May play a key role in the regulation of the intracellular concentration of adenosylhomocysteine. The polypeptide is Adenosylhomocysteinase (Prochlorococcus marinus subsp. pastoris (strain CCMP1986 / NIES-2087 / MED4)).